Reading from the N-terminus, the 351-residue chain is Large ribosomal subunit protein uL3 (351 aa).

2 disordered regions span residues 1-31 (MGHR…TPRT) and 246-271 (KGSR…GQLG).

Belongs to the universal ribosomal protein uL3 family. In terms of assembly, part of the 50S ribosomal subunit. Forms a cluster with proteins L14 and L24e.

Functionally, one of the primary rRNA binding proteins, it binds directly near the 3'-end of the 23S rRNA, where it nucleates assembly of the 50S subunit. The polypeptide is Large ribosomal subunit protein uL3 (Saccharolobus solfataricus (strain ATCC 35092 / DSM 1617 / JCM 11322 / P2) (Sulfolobus solfataricus)).